Consider the following 299-residue polypeptide: Tyrosine recombinase XerC (299 aa).

One can recognise a Core-binding (CB) domain in the interval 1-85 (MKRQLEAYCA…AVRGLYRYLN (85 aa)). The Tyr recombinase domain maps to 106–285 (RLPKVLDTDR…DFQHLAAVYD (180 aa)). Catalysis depends on residues Arg-146, Lys-170, His-237, Arg-240, and His-263. The O-(3'-phospho-DNA)-tyrosine intermediate role is filled by Tyr-272.

Belongs to the 'phage' integrase family. XerC subfamily. Forms a cyclic heterotetrameric complex composed of two molecules of XerC and two molecules of XerD.

The protein localises to the cytoplasm. Functionally, site-specific tyrosine recombinase, which acts by catalyzing the cutting and rejoining of the recombining DNA molecules. The XerC-XerD complex is essential to convert dimers of the bacterial chromosome into monomers to permit their segregation at cell division. It also contributes to the segregational stability of plasmids. In Pseudomonas putida (strain ATCC 47054 / DSM 6125 / CFBP 8728 / NCIMB 11950 / KT2440), this protein is Tyrosine recombinase XerC.